The sequence spans 291 residues: Shikimate dehydrogenase (NADP(+)) (291 aa).

Residues 22–24 (SLS) and T69 contribute to the shikimate site. Residue K73 is the Proton acceptor of the active site. Shikimate is bound by residues N94 and D110. NADP(+)-binding positions include 131–135 (GSGGA) and L226. Y228 is a shikimate binding site. An NADP(+)-binding site is contributed by G249.

Belongs to the shikimate dehydrogenase family. Homodimer.

It carries out the reaction shikimate + NADP(+) = 3-dehydroshikimate + NADPH + H(+). It functions in the pathway metabolic intermediate biosynthesis; chorismate biosynthesis; chorismate from D-erythrose 4-phosphate and phosphoenolpyruvate: step 4/7. In terms of biological role, involved in the biosynthesis of the chorismate, which leads to the biosynthesis of aromatic amino acids. Catalyzes the reversible NADPH linked reduction of 3-dehydroshikimate (DHSA) to yield shikimate (SA). The polypeptide is Shikimate dehydrogenase (NADP(+)) (Synechococcus sp. (strain JA-3-3Ab) (Cyanobacteria bacterium Yellowstone A-Prime)).